The sequence spans 348 residues: Olfactory receptor 2T4 (348 aa).

Topologically, residues 1 to 57 (MDNITWMASHTGWSDFILMGLFRQSKHPMANITWMANHTGWSDFILLGLFRQSKHPA) are extracellular. Residues N31 and N37 are each glycosylated (N-linked (GlcNAc...) asparagine). A helical membrane pass occupies residues 58–81 (LLCVVIFVVFLMALSGNAVLILLI). Over 82-89 (HCDAHLHT) the chain is Cytoplasmic. A helical transmembrane segment spans residues 90–111 (PMYFFISQLSLMDMAYISVTVP). At 112-132 (KMLLDQVMGVNKISAPECGMQ) the chain is on the extracellular side. C129 and C221 are joined by a disulfide. The helical transmembrane segment at 133–152 (MFFYVTLAGSEFFLLATMAY) threads the bilayer. At 153–171 (DRYVAICHPLRYPVLMNHR) the chain is on the cytoplasmic side. A helical transmembrane segment spans residues 172–190 (VCLFLSSGCWFLGSVDGFT). Topologically, residues 191–227 (FTPITMTFPFRGSREIHHFFCEVPAVLNLSCSDTSLY) are extracellular. N-linked (GlcNAc...) asparagine glycosylation occurs at N218. Residues 228–251 (EIFMYLCCVLMLLIPVVIISSSYL) form a helical membrane-spanning segment. Over 252-268 (LILLTIHGMNSAEGRKK) the chain is Cytoplasmic. Residues 269–291 (AFATCSSHLTVVILFYGAAIYTY) form a helical membrane-spanning segment. Topologically, residues 292 to 304 (MLPSSYHTPEKDM) are extracellular. The helical transmembrane segment at 305 to 324 (MVSVFYTILTPVVNPLIYSL) threads the bilayer. Residues 325 to 348 (RNKDVMGALKKMLTVEPAFQKAME) are Cytoplasmic-facing.

Belongs to the G-protein coupled receptor 1 family.

The protein resides in the cell membrane. In terms of biological role, odorant receptor. In Homo sapiens (Human), this protein is Olfactory receptor 2T4 (OR2T4).